The following is a 918-amino-acid chain: Dual serine/threonine and tyrosine protein kinase (918 aa).

The span at 1–19 shows a compositional bias: basic and acidic residues; the sequence is MQKDGTRSSRRMEEGDRRN. A disordered region spans residues 1–29; that stretch reads MQKDGTRSSRRMEEGDRRNGSTGSSGSVS. The Protein kinase domain occupies 643–897; it reads PRIGRELGRG…PLMGIVQPML (255 aa). ATP is bound by residues 649 to 657 and lysine 672; that span reads LGRGQYGVV. The active-site Proton acceptor is the aspartate 768.

Belongs to the protein kinase superfamily. Ser/Thr protein kinase family.

The protein localises to the cytoplasm. It localises to the cell membrane. It is found in the apical cell membrane. Its subcellular location is the basolateral cell membrane. The protein resides in the cell junction. The catalysed reaction is L-seryl-[protein] + ATP = O-phospho-L-seryl-[protein] + ADP + H(+). The enzyme catalyses L-threonyl-[protein] + ATP = O-phospho-L-threonyl-[protein] + ADP + H(+). It catalyses the reaction L-tyrosyl-[protein] + ATP = O-phospho-L-tyrosyl-[protein] + ADP + H(+). Its function is as follows. May act as a positive regulator of ERK phosphorylation downstream of fibroblast growth factor-receptor activation. May induce both caspase-dependent apoptosis and caspase-independent cell death. May play a role in the embryonic development. In Xenopus tropicalis (Western clawed frog), this protein is Dual serine/threonine and tyrosine protein kinase (dstyk).